Here is a 521-residue protein sequence, read N- to C-terminus: MFS siderochrome iron transporter 1 (521 aa).

Polar residues predominate over residues 1–10 (MDKTASLTSQ). Residues 1-29 (MDKTASLTSQDAEKHDPDALRKERATDPP) are disordered. Residues 11–29 (DAEKHDPDALRKERATDPP) show a composition bias toward basic and acidic residues. A run of 5 helical transmembrane segments spans residues 62–82 (WGLF…PLMG), 99–119 (FLSL…AFGC), 126–146 (WSFN…GGTQ), 148–168 (FVAL…NMPV), and 187–207 (ILSI…WPLI). N-linked (GlcNAc...) asparagine glycosylation is present at Asn209. Transmembrane regions (helical) follow at residues 229–249 (YLLF…FFVF), 330–350 (LAWS…ASTL), 379–399 (VIIA…VEQP), 404–424 (KGTL…TTTA), 431–451 (LGWN…LYAI), and 466–486 (GLTA…ALYA). Residue Asn487 is glycosylated (N-linked (GlcNAc...) asparagine). A helical transmembrane segment spans residues 491–511 (AVPVYVSGALIIASGAMALLL).

It belongs to the major facilitator superfamily.

It localises to the membrane. Major facilitator transporter probably involved in siderophore basidioferrin transmembrane transport. The chain is MFS siderochrome iron transporter 1 from Ceriporiopsis subvermispora (strain B) (White-rot fungus).